The chain runs to 552 residues: CTP synthase (552 aa).

An amidoligase domain region spans residues 1–270; the sequence is MTKYVFVTGG…DRIICEELKL (270 aa). A CTP-binding site is contributed by serine 13. Serine 13 serves as a coordination point for UTP. Residues 14–19 and aspartate 71 each bind ATP; that span reads SLGKGI. Positions 71 and 144 each coordinate Mg(2+). Residues 151–153, 191–196, and lysine 227 contribute to the CTP site; these read DIE and KTKPTQ. Residues 191 to 196 and lysine 227 each bind UTP; that span reads KTKPTQ. The Glutamine amidotransferase type-1 domain maps to 295-547; that stretch reads TIGMVGKYVD…VEAALANKQA (253 aa). Glycine 356 provides a ligand contact to L-glutamine. The active-site Nucleophile; for glutamine hydrolysis is cysteine 383. Residues 384–387, glutamate 407, and arginine 473 each bind L-glutamine; that span reads LGMQ. Residues histidine 520 and glutamate 522 contribute to the active site.

Belongs to the CTP synthase family. In terms of assembly, homotetramer.

It carries out the reaction UTP + L-glutamine + ATP + H2O = CTP + L-glutamate + ADP + phosphate + 2 H(+). The catalysed reaction is L-glutamine + H2O = L-glutamate + NH4(+). It catalyses the reaction UTP + NH4(+) + ATP = CTP + ADP + phosphate + 2 H(+). It participates in pyrimidine metabolism; CTP biosynthesis via de novo pathway; CTP from UDP: step 2/2. Allosterically activated by GTP, when glutamine is the substrate; GTP has no effect on the reaction when ammonia is the substrate. The allosteric effector GTP functions by stabilizing the protein conformation that binds the tetrahedral intermediate(s) formed during glutamine hydrolysis. Inhibited by the product CTP, via allosteric rather than competitive inhibition. Functionally, catalyzes the ATP-dependent amination of UTP to CTP with either L-glutamine or ammonia as the source of nitrogen. Regulates intracellular CTP levels through interactions with the four ribonucleotide triphosphates. The polypeptide is CTP synthase (Burkholderia cenocepacia (strain HI2424)).